The chain runs to 111 residues: Mitochondrial import inner membrane translocase subunit Tim10B (111 aa).

The Twin CX3C motif signature appears at C24 to C48. Disulfide bonds link C24–C48 and C28–C44. The segment at K73 to Q111 is disordered. Residues A94–V105 show a composition bias toward low complexity.

This sequence belongs to the small Tim family. Component of the TIM22 complex, whose core is composed of tim-22, associated with peripheral protein tin-9.2/tim-10b and the 70 kDa heterohexamer. In most cases, the 70 kDa complex is composed of TIMM9 and TIMM10.

It localises to the mitochondrion inner membrane. In terms of biological role, component of the TIM22 complex, a complex that mediates the import and insertion of multi-pass transmembrane proteins into the mitochondrial inner membrane. The TIM22 complex forms a twin-pore translocase that uses the membrane potential as the external driving force. In the TIM22 complex, it may act as a docking point for the soluble 70 kDa complex that guides the target proteins in transit through the aqueous mitochondrial intermembrane space. The polypeptide is Mitochondrial import inner membrane translocase subunit Tim10B (tin-9.2) (Caenorhabditis elegans).